The sequence spans 897 residues: MQTHEIRKRFLDHFVKAGHTEVPSASVILDDPNLLFVNAGMVQFVPFFLGQRTPPYQRATSIQKCIRTPDIDEVGITTRHNTFFQMAGNFSFGDYFKKGAIEFAWTLLTNPVDQSGYGFDPEKLWATVYLDDDEAIQLWQEVAGLPLERIQRRGMADNYWSMGIPGPCGPSSEIYVDRGPEYGIEGGPEANEDRYIEIWNLVFMQNERGEGTGKSDFEILGPLPRKNIDTGMGIERVACLLQGVDNVYETDLLRPVIDAVAARAPRGYGRGSHSDDVRYRIIADHSRTAAILIGDGVSPGNDGRGYVLRRLLRRVIRSAKLLGIDDAVVGDLMATVRDAMGPSYPELVTDFDRIQRIAVAEETAFNRTLSSGSRLFEEAAQSTKAAGADRLSGRDAFTLHDTYGFPIELTLEMAAEADLAVDEEGFRSLMAEQRQRAKADAAARKQAHTDLTAYRELVDAHPTQFTGFDELTTEARILGIFVDGRRVPVVGHDTATAQHRIELVLDRSPFYAESGGQIADEGTITGTGASQTAKAAVSDVQKIAKTLWVHRVTVESGEFVEGDTVTAAVDPRWRHGATQGHSGTHMVHAALRQVLGPNAVQAGSLNRPGYLRFDFNWQGALTDDQRTQIEEVTNEAVEADFEVHSFTTELEKAKSMGAMALFGEAYPDEVRVVEIGGPFSLELCGGTHVRSSAQIGPVTILGESSVGSGVRRVEAYVGLDSFRHLAKERALMAGLASSLKVPSEEVPARVAGLVERLKAAEKELDRMRLANARAAAVNAVAGAERVGKVRLVAQRMAGGMSAGDLRTLVGDIRGKLGGDPAVVALIAEGDNDTVPFVVAVNPAAQDLGLRANELVKQFGAAVNGRGGGKADLAQGSGKGAAGIDAALAALRAEIDRS.

Positions 581, 585, 684, and 688 each coordinate Zn(2+).

Belongs to the class-II aminoacyl-tRNA synthetase family. Zn(2+) is required as a cofactor.

It localises to the cytoplasm. The enzyme catalyses tRNA(Ala) + L-alanine + ATP = L-alanyl-tRNA(Ala) + AMP + diphosphate. Its function is as follows. Catalyzes the attachment of alanine to tRNA(Ala) in a two-step reaction: alanine is first activated by ATP to form Ala-AMP and then transferred to the acceptor end of tRNA(Ala). Also edits incorrectly charged Ser-tRNA(Ala) and Gly-tRNA(Ala) via its editing domain. The polypeptide is Alanine--tRNA ligase (Mycobacterium sp. (strain JLS)).